Here is a 912-residue protein sequence, read N- to C-terminus: Protein translocase subunit SecA (912 aa).

ATP-binding positions include Q87, 105 to 109, and D508; that span reads GEGKT. The tract at residues 855–912 is disordered; sequence QHQDAGGYGADEEVEQMQGGNAPVPVSQVTRDEPKVGRNDPCPCGSGKKYKHCHGQLS. C896, C898, C907, and H908 together coordinate Zn(2+). Residues 902-912 show a composition bias toward basic residues; the sequence is KKYKHCHGQLS.

Belongs to the SecA family. Monomer and homodimer. Part of the essential Sec protein translocation apparatus which comprises SecA, SecYEG and auxiliary proteins SecDF-YajC and YidC. The cofactor is Zn(2+).

The protein localises to the cell inner membrane. It is found in the cytoplasm. It catalyses the reaction ATP + H2O + cellular proteinSide 1 = ADP + phosphate + cellular proteinSide 2.. Its function is as follows. Part of the Sec protein translocase complex. Interacts with the SecYEG preprotein conducting channel. Has a central role in coupling the hydrolysis of ATP to the transfer of proteins into and across the cell membrane, serving both as a receptor for the preprotein-SecB complex and as an ATP-driven molecular motor driving the stepwise translocation of polypeptide chains across the membrane. This is Protein translocase subunit SecA from Xanthomonas campestris pv. campestris (strain B100).